A 329-amino-acid polypeptide reads, in one-letter code: BRISC and BRCA1-A complex member 1 (329 aa).

Met1 carries the post-translational modification N-acetylmethionine. The interval 1-84 (MEVAEPSSPT…VPPPAPEVQI (84 aa)) is disordered. Position 8 is a phosphoserine (Ser8). The segment covering 10–19 (TEEEEEEEEH) has biased composition (acidic residues). Phosphoserine is present on residues Ser29, Ser49, Ser57, and Ser62. Thr65 carries the phosphothreonine modification. Phosphoserine is present on Ser66. The interval 95–298 (VIICLDLSEE…LELHNCMAKL (204 aa)) is VWFA-like.

The protein belongs to the BABAM1 family. In terms of assembly, component of the ARISC complex, at least composed of UIMC1/RAP80, ABRAXAS1, BRCC3/BRCC36, BABAM2 and BABAM1/NBA1. Component of the BRCA1-A complex, at least composed of BRCA1, BARD1, UIMC1/RAP80, ABRAXAS1, BRCC3/BRCC36, BABAM2 and BABAM1/NBA1. In the BRCA1-A complex, interacts directly with ABRAXAS1 and BABAM2. Component of the BRISC complex, at least composed of ABRAXAS2, BRCC3/BRCC36, BABAM2 and BABAM1/NBA1. Identified in a complex with SHMT2 and the other subunits of the BRISC complex.

It localises to the cytoplasm. Its subcellular location is the nucleus. In terms of biological role, component of the BRCA1-A complex, a complex that specifically recognizes 'Lys-63'-linked ubiquitinated histones H2A and H2AX at DNA lesions sites, leading to target the BRCA1-BARD1 heterodimer to sites of DNA damage at double-strand breaks (DSBs). The BRCA1-A complex also possesses deubiquitinase activity that specifically removes 'Lys-63'-linked ubiquitin on histones H2A and H2AX. In the BRCA1-A complex, it is required for the complex integrity and its localization at DSBs. Component of the BRISC complex, a multiprotein complex that specifically cleaves 'Lys-63'-linked ubiquitin in various substrates. In these 2 complexes, it is probably required to maintain the stability of BABAM2 and help the 'Lys-63'-linked deubiquitinase activity mediated by BRCC3/BRCC36 component. The BRISC complex is required for normal mitotic spindle assembly and microtubule attachment to kinetochores via its role in deubiquitinating NUMA1. Plays a role in interferon signaling via its role in the deubiquitination of the interferon receptor IFNAR1; deubiquitination increases IFNAR1 activity by enhancing its stability and cell surface expression. Down-regulates the response to bacterial lipopolysaccharide (LPS) via its role in IFNAR1 deubiquitination. The protein is BRISC and BRCA1-A complex member 1 (BABAM1) of Homo sapiens (Human).